A 448-amino-acid polypeptide reads, in one-letter code: DNA repair protein RadA (448 aa).

The C4-type zinc finger occupies 10 to 27; the sequence is CQHCGFTSPKWLGKCVQC. 96-103 contributes to the ATP binding site; that stretch reads GSPGVGKS. Positions 253-257 match the RadA KNRFG motif motif; that stretch reads KNRFG. A lon-protease-like region spans residues 351 to 448; sequence DVFINVSGGI…NVVGKIVEWM (98 aa).

The protein belongs to the RecA family. RadA subfamily.

Its function is as follows. DNA-dependent ATPase involved in processing of recombination intermediates, plays a role in repairing DNA breaks. Stimulates the branch migration of RecA-mediated strand transfer reactions, allowing the 3' invading strand to extend heteroduplex DNA faster. Binds ssDNA in the presence of ADP but not other nucleotides, has ATPase activity that is stimulated by ssDNA and various branched DNA structures, but inhibited by SSB. Does not have RecA's homology-searching function. The sequence is that of DNA repair protein RadA from Helicobacter pylori (strain J99 / ATCC 700824) (Campylobacter pylori J99).